The chain runs to 436 residues: Adenylosuccinate synthetase (436 aa).

Residues 12–18 and 40–42 each bind GTP; these read GDEGKGK and GHT. The active-site Proton acceptor is the D13. 2 residues coordinate Mg(2+): D13 and G40. IMP contacts are provided by residues 13–16, 38–41, T130, R144, Q230, T245, and R309; these read DEGK and NAGH. The active-site Proton donor is H41. 305–311 is a substrate binding site; that stretch reads TTTGRPR. GTP is bound by residues R311, 337-339, and 419-421; these read KLD and SVG.

This sequence belongs to the adenylosuccinate synthetase family. In terms of assembly, homodimer. The cofactor is Mg(2+).

The protein resides in the cytoplasm. It carries out the reaction IMP + L-aspartate + GTP = N(6)-(1,2-dicarboxyethyl)-AMP + GDP + phosphate + 2 H(+). It functions in the pathway purine metabolism; AMP biosynthesis via de novo pathway; AMP from IMP: step 1/2. Functionally, plays an important role in the de novo pathway of purine nucleotide biosynthesis. Catalyzes the first committed step in the biosynthesis of AMP from IMP. This chain is Adenylosuccinate synthetase, found in Myxococcus xanthus (strain DK1622).